A 61-amino-acid chain; its full sequence is Large ribosomal subunit protein uL30 (61 aa).

The protein belongs to the universal ribosomal protein uL30 family. Part of the 50S ribosomal subunit.

The sequence is that of Large ribosomal subunit protein uL30 from Neisseria gonorrhoeae (strain ATCC 700825 / FA 1090).